A 319-amino-acid polypeptide reads, in one-letter code: ATP-dependent 6-phosphofructokinase (319 aa).

Gly-11 is a binding site for ATP. 21–25 (RAVTR) is an ADP binding site. Residues 72-73 (RF) and 102-105 (GDGS) each bind ATP. Asp-103 contributes to the Mg(2+) binding site. Substrate is bound at residue 125–127 (SID). Catalysis depends on Asp-127, which acts as the Proton acceptor. Arg-154 contributes to the ADP binding site. Residues Arg-162 and 169-171 (MGR) contribute to the substrate site. ADP-binding positions include 185–187 (GAD) and 213–215 (KKH). Substrate contacts are provided by residues Glu-222, Arg-243, and 249-252 (HMQR).

Belongs to the phosphofructokinase type A (PFKA) family. ATP-dependent PFK group I subfamily. Prokaryotic clade 'B1' sub-subfamily. Homotetramer. The cofactor is Mg(2+).

The protein localises to the cytoplasm. It carries out the reaction beta-D-fructose 6-phosphate + ATP = beta-D-fructose 1,6-bisphosphate + ADP + H(+). It functions in the pathway carbohydrate degradation; glycolysis; D-glyceraldehyde 3-phosphate and glycerone phosphate from D-glucose: step 3/4. Its activity is regulated as follows. Allosterically activated by ADP and other diphosphonucleosides, and allosterically inhibited by phosphoenolpyruvate. Its function is as follows. Catalyzes the phosphorylation of D-fructose 6-phosphate to fructose 1,6-bisphosphate by ATP, the first committing step of glycolysis. This Lactobacillus gasseri (strain ATCC 33323 / DSM 20243 / BCRC 14619 / CIP 102991 / JCM 1131 / KCTC 3163 / NCIMB 11718 / NCTC 13722 / AM63) protein is ATP-dependent 6-phosphofructokinase.